We begin with the raw amino-acid sequence, 212 residues long: MSKGFLVSLEGPEGAGKTSVLEALLPILEEKGVKVLTTREPGGVLIGEKIREVILDPSHTQMDAKTELLLYIASRRQHLVEKVLPALEAGKLVIMDRFIDSSVAYQGFGRGLDIEAIDWLNQFATDGLKPDLTLYFDIEVEEGLARIAANSDREVNRLDLEGLDLHKKVRQGYLSLLDKEGNRIVKIDASLPLEQVVETTKAVLFDGMGLAK.

Residue 11–18 (GPEGAGKT) participates in ATP binding.

This sequence belongs to the thymidylate kinase family.

The enzyme catalyses dTMP + ATP = dTDP + ADP. Its function is as follows. Phosphorylation of dTMP to form dTDP in both de novo and salvage pathways of dTTP synthesis. This chain is Thymidylate kinase, found in Streptococcus pneumoniae (strain P1031).